The primary structure comprises 1536 residues: Tyrosine-protein kinase BAZ1B (1536 aa).

Residues 25 to 130 enclose the WAC domain; the sequence is EVYTIEHTKE…GEKCDLMVGN (106 aa). Disordered stretches follow at residues 144-207, 304-470, and 557-579; these read LENP…TTMK, PSTK…GKPF, and LREK…SRRY. Basic and acidic residues-rich tracts occupy residues 151–196 and 334–343; these read NAEK…DRAR and AKGDKKKNKD. Residues 344 to 355 are compositionally biased toward polar residues; that stretch reads SQNIPLSPTIWS. Positions 392–401 are enriched in basic and acidic residues; the sequence is KQGDKKSSDP. Low complexity predominate over residues 443–452; that stretch reads AKSPAAAGSP. Positions 515 to 583 form a coiled coil; sequence EELKELVQKR…EMSRRYEDQE (69 aa). Positions 603 to 667 constitute a DDT domain; it reads NTIFGDVAMV…LQTLLQDELA (65 aa). 2 coiled-coil regions span residues 768–803 and 850–890; these read HQKS…METK and IQAK…FQDA. Over residues 785 to 832 the composition is skewed to basic and acidic residues; sequence ANDRKRAEKQKRKEQMETKTDGDVLIKAEKKKESTVKKETPKVLPKEE. The tract at residues 785–839 is disordered; it reads ANDRKRAEKQKRKEQMETKTDGDVLIKAEKKKESTVKKETPKVLPKEEPEPEDMI. Positions 940-973 are disordered; sequence PPEEEPVLTEEEEEEEEVKKEEETEDGEKEDEGS. Acidic residues-rich tracts occupy residues 941–955 and 962–972; these read PEEE…EEEE and ETEDGEKEDEG. The PHD-type zinc finger occupies 1202 to 1252; it reads NARCKVCRRKGEDDKLILCDECNKAFHLFCLRPALYRIPAGEWLCPACQPT. Disordered regions lie at residues 1256–1371 and 1477–1536; these read RSSR…KDVE and LRRR…TKQK. A coiled-coil region spans residues 1261-1293; that stretch reads RNYKEDSEEEEDSEEEDEEESEEEDSEEEHRNT. Positions 1266-1287 are enriched in acidic residues; sequence DSEEEEDSEEEDEEESEEEDSE. Over residues 1297-1316 the composition is skewed to basic residues; that stretch reads LRSRKKVKTSSKSKMQKKPA. Low complexity predominate over residues 1325 to 1350; that stretch reads KTDTNPSKTSPKSSAKPKSRAAPSSP. Position 1349 is a phosphoserine (serine 1349). One can recognise a Bromo domain in the interval 1366-1470; that stretch reads RKKDVELQKC…EAFVELLQKS (105 aa). Residues 1491–1502 show a composition bias toward acidic residues; it reads NSDDDDDDEEED. Positions 1506–1524 are enriched in basic residues; that stretch reads KKQKNGKQGKKASSKRKVE. The segment covering 1525-1536 has biased composition (basic and acidic residues); that stretch reads HSRTEKYQTKQK.

Belongs to the WAL family. BAZ1B subfamily. In terms of assembly, interacts with smarca5/snf2h; the interaction is direct and forms the WICH complex. Component of the B-WICH complex. Mn(2+) is required as a cofactor.

It localises to the nucleus. The enzyme catalyses L-tyrosyl-[protein] + ATP = O-phospho-L-tyrosyl-[protein] + ADP + H(+). Atypical tyrosine-protein kinase that plays a central role in chromatin remodeling and acts as a transcription regulator. Involved in DNA damage response by phosphorylating 'Tyr-142' of histone H2AX (H2AXY142ph). H2AXY142ph plays a central role in DNA repair and acts as a mark that distinguishes between apoptotic and repair responses to genotoxic stress. Essential component of the WICH complex, a chromatin remodeling complex that mobilizes nucleosomes and reconfigures irregular chromatin to a regular nucleosomal array structure. The WICH complex regulates the transcription of various genes, has a role in RNA polymerase I and RNA polymerase III transcription, mediates the histone H2AX phosphorylation at 'Tyr-142', and is involved in the maintenance of chromatin structures during DNA replication processes. The chain is Tyrosine-protein kinase BAZ1B (baz1b) from Danio rerio (Zebrafish).